Here is a 117-residue protein sequence, read N- to C-terminus: Large ribosomal subunit protein uL22 (117 aa).

This sequence belongs to the universal ribosomal protein uL22 family. In terms of assembly, part of the 50S ribosomal subunit.

Functionally, this protein binds specifically to 23S rRNA; its binding is stimulated by other ribosomal proteins, e.g. L4, L17, and L20. It is important during the early stages of 50S assembly. It makes multiple contacts with different domains of the 23S rRNA in the assembled 50S subunit and ribosome. In terms of biological role, the globular domain of the protein is located near the polypeptide exit tunnel on the outside of the subunit, while an extended beta-hairpin is found that lines the wall of the exit tunnel in the center of the 70S ribosome. In Chlorobium phaeobacteroides (strain BS1), this protein is Large ribosomal subunit protein uL22.